The sequence spans 354 residues: Small ribosomal subunit protein uS2 (354 aa).

The protein belongs to the universal ribosomal protein uS2 family.

The polypeptide is Small ribosomal subunit protein uS2 (Methylorubrum populi (strain ATCC BAA-705 / NCIMB 13946 / BJ001) (Methylobacterium populi)).